The following is a 458-amino-acid chain: tRNA-2-methylthio-N(6)-dimethylallyladenosine synthase (458 aa).

An MTTase N-terminal domain is found at 15-134 (KKVFIKTYGC…LPDLLEQTKQ (120 aa)). Cys24, Cys60, Cys97, Cys175, Cys179, and Cys182 together coordinate [4Fe-4S] cluster. Residues 161–393 (RKRGVSAFLT…QVLLLEQQNA (233 aa)) form the Radical SAM core domain. The TRAM domain occupies 396 to 457 (RSKIGQTTDV…SNSFVGEMTN (62 aa)).

This sequence belongs to the methylthiotransferase family. MiaB subfamily. As to quaternary structure, monomer. Requires [4Fe-4S] cluster as cofactor.

It localises to the cytoplasm. The enzyme catalyses N(6)-dimethylallyladenosine(37) in tRNA + (sulfur carrier)-SH + AH2 + 2 S-adenosyl-L-methionine = 2-methylsulfanyl-N(6)-dimethylallyladenosine(37) in tRNA + (sulfur carrier)-H + 5'-deoxyadenosine + L-methionine + A + S-adenosyl-L-homocysteine + 2 H(+). Functionally, catalyzes the methylthiolation of N6-(dimethylallyl)adenosine (i(6)A), leading to the formation of 2-methylthio-N6-(dimethylallyl)adenosine (ms(2)i(6)A) at position 37 in tRNAs that read codons beginning with uridine. This is tRNA-2-methylthio-N(6)-dimethylallyladenosine synthase from Bartonella henselae (strain ATCC 49882 / DSM 28221 / CCUG 30454 / Houston 1) (Rochalimaea henselae).